The following is a 900-amino-acid chain: Serine-rich coiled-coil domain-containing protein 1 (900 aa).

Disordered stretches follow at residues 1-100 (MGDS…HSNM) and 156-178 (KSEG…QSTR). Over residues 29–56 (LPSSPSSSNTVGVHSSSPSSTNSSSGST) the composition is skewed to low complexity. Over residues 81–100 (EPTNQNLSISNGAQPGHSNM) the composition is skewed to polar residues. Positions 673 to 707 (MKDECSMLKLQLKEKDELISQLQEELGKVRHLQKA) form a coiled coil.

The protein belongs to the CCSER family.

This is Serine-rich coiled-coil domain-containing protein 1 (CCSER1) from Homo sapiens (Human).